The sequence spans 227 residues: ATP synthase F(0) complex subunit a (227 aa).

6 helical membrane-spanning segments follow: residues 9–29 (FASPSYLGIPLIAIAIALPWV), 69–89 (WALLLASLMIFLITINMLGLL), 98–118 (QLSLNMGFAVPLWLATVIIGM), 132–152 (EGTPIPLIPVLIIIETISLFI), 165–185 (LTAGHLLIQLIATAVFVLMPM), and 190–210 (AILTATVLFLLTLLEVAVAMI).

This sequence belongs to the ATPase A chain family. In terms of assembly, component of the ATP synthase complex composed at least of ATP5F1A/subunit alpha, ATP5F1B/subunit beta, ATP5MC1/subunit c (homooctomer), MT-ATP6/subunit a, MT-ATP8/subunit 8, ATP5ME/subunit e, ATP5MF/subunit f, ATP5MG/subunit g, ATP5MK/subunit k, ATP5MJ/subunit j, ATP5F1C/subunit gamma, ATP5F1D/subunit delta, ATP5F1E/subunit epsilon, ATP5PF/subunit F6, ATP5PB/subunit b, ATP5PD/subunit d, ATP5PO/subunit OSCP. ATP synthase complex consists of a soluble F(1) head domain (subunits alpha(3) and beta(3)) - the catalytic core - and a membrane F(0) domain - the membrane proton channel (subunits c, a, 8, e, f, g, k and j). These two domains are linked by a central stalk (subunits gamma, delta, and epsilon) rotating inside the F1 region and a stationary peripheral stalk (subunits F6, b, d, and OSCP). Interacts with DNAJC30; interaction is direct.

It is found in the mitochondrion inner membrane. It catalyses the reaction H(+)(in) = H(+)(out). Its function is as follows. Subunit a, of the mitochondrial membrane ATP synthase complex (F(1)F(0) ATP synthase or Complex V) that produces ATP from ADP in the presence of a proton gradient across the membrane which is generated by electron transport complexes of the respiratory chain. ATP synthase complex consist of a soluble F(1) head domain - the catalytic core - and a membrane F(1) domain - the membrane proton channel. These two domains are linked by a central stalk rotating inside the F(1) region and a stationary peripheral stalk. During catalysis, ATP synthesis in the catalytic domain of F(1) is coupled via a rotary mechanism of the central stalk subunits to proton translocation. With the subunit c (ATP5MC1), forms the proton-conducting channel in the F(0) domain, that contains two crucial half-channels (inlet and outlet) that facilitate proton movement from the mitochondrial intermembrane space (IMS) into the matrix. Protons are taken up via the inlet half-channel and released through the outlet half-channel, following a Grotthuss mechanism. In Carassius auratus (Goldfish), this protein is ATP synthase F(0) complex subunit a.